The chain runs to 105 residues: Small ribosomal subunit protein uS10c (105 aa).

The protein belongs to the universal ribosomal protein uS10 family. Part of the 30S ribosomal subunit.

The protein resides in the plastid. It localises to the cyanelle. Involved in the binding of tRNA to the ribosomes. This Cyanophora paradoxa protein is Small ribosomal subunit protein uS10c (rps10).